The primary structure comprises 355 residues: Diacylglycerol O-acyltransferase 2A (355 aa).

The next 2 membrane-spanning stretches (helical) occupy residues leucine 41–proline 61 and valine 62–tryptophan 78. An N-linked (GlcNAc...) asparagine glycan is attached at asparagine 142.

It belongs to the diacylglycerol acyltransferase family.

It is found in the endoplasmic reticulum membrane. It catalyses the reaction an acyl-CoA + a 1,2-diacyl-sn-glycerol = a triacyl-sn-glycerol + CoA. It functions in the pathway glycerolipid metabolism; triacylglycerol biosynthesis. Functionally, catalyzes the terminal and only committed step in triacylglycerol synthesis by using diacylglycerol and fatty acyl CoA as substrates. Required for storage lipid synthesis. The polypeptide is Diacylglycerol O-acyltransferase 2A (DGAT2A) (Umbelopsis ramanniana (Oleaginous fungus)).